Here is a 79-residue protein sequence, read N- to C-terminus: Morintide mO1 (79 aa).

An N-terminal signal peptide occupies residues 1–20; the sequence is MAKLSFLSLFLLCLVATATA. The 43-residue stretch at 21–63 folds into the Chitin-binding type-1 domain; that stretch reads QNCGRQAGNRACANQLCCSQYGFCGSTSEYCSRANGCQSNCRG. Cystine bridges form between Cys-23–Cys-38, Cys-32–Cys-44, Cys-37–Cys-51, and Cys-57–Cys-61. A propeptide spanning residues 64 to 79 is cleaved from the precursor; sequence GGGADGAGGEAGGGGP.

As to expression, leaves (at protein level).

Functionally, chitin-binding protein which functions in defense against chitin-containing fungal pathogens. Inhibits the growth of budding hyphae in A.alternata and A.brassiciola. This is Morintide mO1 from Moringa oleifera (Horseradish tree).